Consider the following 364-residue polypeptide: tRNA/tmRNA (uracil-C(5))-methyltransferase (364 aa).

S-adenosyl-L-methionine contacts are provided by Q188, Y216, N221, E237, and D297. C322 functions as the Nucleophile in the catalytic mechanism. The Proton acceptor role is filled by E356.

Belongs to the class I-like SAM-binding methyltransferase superfamily. RNA M5U methyltransferase family. TrmA subfamily.

It catalyses the reaction uridine(54) in tRNA + S-adenosyl-L-methionine = 5-methyluridine(54) in tRNA + S-adenosyl-L-homocysteine + H(+). The catalysed reaction is uridine(341) in tmRNA + S-adenosyl-L-methionine = 5-methyluridine(341) in tmRNA + S-adenosyl-L-homocysteine + H(+). Its function is as follows. Dual-specificity methyltransferase that catalyzes the formation of 5-methyluridine at position 54 (m5U54) in all tRNAs, and that of position 341 (m5U341) in tmRNA (transfer-mRNA). This is tRNA/tmRNA (uracil-C(5))-methyltransferase from Colwellia psychrerythraea (strain 34H / ATCC BAA-681) (Vibrio psychroerythus).